Here is a 147-residue protein sequence, read N- to C-terminus: Peptide deformylase (147 aa).

The Fe cation site is built by C88 and H130. The active site involves E131. H134 serves as a coordination point for Fe cation.

It belongs to the polypeptide deformylase family. Fe(2+) is required as a cofactor.

It carries out the reaction N-terminal N-formyl-L-methionyl-[peptide] + H2O = N-terminal L-methionyl-[peptide] + formate. Functionally, removes the formyl group from the N-terminal Met of newly synthesized proteins. Requires at least a dipeptide for an efficient rate of reaction. N-terminal L-methionine is a prerequisite for activity but the enzyme has broad specificity at other positions. This is Peptide deformylase from Alkaliphilus metalliredigens (strain QYMF).